Reading from the N-terminus, the 245-residue chain is MDDTSTLIDVKEYPDTEVQKNRVLTLEEWREKWVDGKIGFHQEQGHQLLKKHLDTFLKGENVLRVFFPLCGKAVEMKWFADRGHCVVGVEISELGIREFFTEQNLSYSEEPIMEIPGAKVFKSSSGNISLYCCNLFDLPRVNIGKFDRIWDRGALVAVNPGDRKCYTDIMLSLTRKGFRYLLAVLSYDPTKHPGPPFYVPDAEIKNLFGSTCNIHCLEKVDVFEERHKSWGIDYIVEKLYLLTEK.

Residue 29–40 (WREKWVDGKIGF) coordinates S-adenosyl-L-methionine. Phe-40 is a substrate binding site. Lys-58 carries the post-translational modification N6-acetyllysine. Leu-69, Glu-90, and Arg-152 together coordinate S-adenosyl-L-methionine.

It belongs to the class I-like SAM-binding methyltransferase superfamily. TPMT family. As to quaternary structure, monomer.

The protein localises to the cytoplasm. It catalyses the reaction S-adenosyl-L-methionine + a thiopurine = S-adenosyl-L-homocysteine + a thiopurine S-methylether.. The polypeptide is Thiopurine S-methyltransferase (TPMT) (Lynx rufus (Bobcat)).